The chain runs to 535 residues: Light-independent protochlorophyllide reductase subunit B (535 aa).

Aspartate 36 contacts [4Fe-4S] cluster. Aspartate 292 (proton donor) is an active-site residue. 428–429 provides a ligand contact to substrate; sequence GL.

Belongs to the ChlB/BchB/BchZ family. Protochlorophyllide reductase is composed of three subunits; BchL, BchN and BchB. Forms a heterotetramer of two BchB and two BchN subunits. It depends on [4Fe-4S] cluster as a cofactor.

The catalysed reaction is chlorophyllide a + oxidized 2[4Fe-4S]-[ferredoxin] + 2 ADP + 2 phosphate = protochlorophyllide a + reduced 2[4Fe-4S]-[ferredoxin] + 2 ATP + 2 H2O. Its pathway is porphyrin-containing compound metabolism; bacteriochlorophyll biosynthesis (light-independent). Component of the dark-operative protochlorophyllide reductase (DPOR) that uses Mg-ATP and reduced ferredoxin to reduce ring D of protochlorophyllide (Pchlide) to form chlorophyllide a (Chlide). This reaction is light-independent. The NB-protein (BchN-BchB) is the catalytic component of the complex. This chain is Light-independent protochlorophyllide reductase subunit B, found in Chlorobaculum parvum (strain DSM 263 / NCIMB 8327) (Chlorobium vibrioforme subsp. thiosulfatophilum).